We begin with the raw amino-acid sequence, 384 residues long: MAP kinase-activated protein kinase 3 (384 aa).

At M1 the chain carries N-acetylmethionine. Positions 1–33 (MDGETAGEKGSLVPQPGALGAPALGGAPAPGVR) are disordered. Low complexity predominate over residues 14 to 31 (PQPGALGAPALGGAPAPG). Residues 46-306 (QLSKQVLGLG…IMQFMNHPWI (261 aa)) form the Protein kinase domain. ATP-binding positions include 52–60 (LGLGVNGKV) and K75. D168 (proton acceptor) is an active-site residue. Residue T203 is modified to Phosphothreonine; by MAPK14. The residue at position 253 (S253) is a Phosphoserine; by MAPK14. S309 bears the Phosphoserine; by autocatalysis mark. The tract at residues 309–345 (SMEVPQTPLHTARVLEEDKDHWDDVKEEMTSALATMR) is autoinhibitory helix. The residue at position 315 (T315) is a Phosphothreonine; by MAPK14. The Nuclear export signal (NES) motif lies at 337–346 (MTSALATMRV). Residues 347 to 371 (DYDQVKIKDLKTSNNRLLNKRRKKQ) form a p38 MAPK-binding site region. 2 short sequence motifs (bipartite nuclear localization signal) span residues 352–355 (KIKD) and 366–370 (KRRKK). The disordered stretch occupies residues 359-384 (SNNRLLNKRRKKQGGSSSASPGCNNQ). Residues 372-384 (GGSSSASPGCNNQ) are compositionally biased toward polar residues.

It belongs to the protein kinase superfamily. CAMK Ser/Thr protein kinase family. In terms of assembly, heterodimer with p38-alpha/MAPK14. The heterodimer with p38-alpha/MAPK14 forms a stable complex: molecules are positioned 'face to face' so that the ATP-binding sites of both kinases are at the heterodimer interface. Interacts with TCF3 and with polycomb proteins, such as PCH2 and BMI1/PCGF4. Phosphorylated and activated by MAPK1/ERK2 and MAPK3/ERK1. Phosphorylated and activated by MAP kinase p38-alpha/MAPK14 at Thr-203, Ser-253 and Thr-315.

The protein resides in the nucleus. It is found in the cytoplasm. The enzyme catalyses L-seryl-[protein] + ATP = O-phospho-L-seryl-[protein] + ADP + H(+). The catalysed reaction is L-threonyl-[protein] + ATP = O-phospho-L-threonyl-[protein] + ADP + H(+). With respect to regulation, activated following phosphorylation by p38-alpha/MAPK14 following various stresses. Inhibited by ligand 5B (2'-[2-(1,3-benzodioxol-5-yl)pyrimidin-4-yl]-5',6'-dihydrospiro[piperidine-4,7'-pyrrolo[3,2-c]pyridin]- 4'(1'h)-one) and ligand P4O (2-[2-(2-fluorophenyl)pyridin-4-yl]-1,5,6,7-tetrahydro- 4h-pyrrolo[3,2-c]pyridin-4-one), 2 ATP-competitive inhibitors. In terms of biological role, stress-activated serine/threonine-protein kinase involved in cytokines production, endocytosis, cell migration, chromatin remodeling and transcriptional regulation. Following stress, it is phosphorylated and activated by MAP kinase p38-alpha/MAPK14, leading to phosphorylation of substrates. Phosphorylates serine in the peptide sequence, Hyd-X-R-X(2)-S, where Hyd is a large hydrophobic residue. MAPKAPK2 and MAPKAPK3, share the same function and substrate specificity, but MAPKAPK3 kinase activity and level in protein expression are lower compared to MAPKAPK2. Phosphorylates HSP27/HSPB1, KRT18, KRT20, RCSD1, RPS6KA3, TAB3 and TTP/ZFP36. Mediates phosphorylation of HSP27/HSPB1 in response to stress, leading to dissociate HSP27/HSPB1 from large small heat-shock protein (sHsps) oligomers and impair their chaperone activities and ability to protect against oxidative stress effectively. Involved in inflammatory response by regulating tumor necrosis factor (TNF) and IL6 production post-transcriptionally: acts by phosphorylating AU-rich elements (AREs)-binding proteins, such as TTP/ZFP36, leading to regulate the stability and translation of TNF and IL6 mRNAs. Phosphorylation of TTP/ZFP36, a major post-transcriptional regulator of TNF, promotes its binding to 14-3-3 proteins and reduces its ARE mRNA affinity leading to inhibition of dependent degradation of ARE-containing transcript. Involved in toll-like receptor signaling pathway (TLR) in dendritic cells: required for acute TLR-induced macropinocytosis by phosphorylating and activating RPS6KA3. Also acts as a modulator of Polycomb-mediated repression. The polypeptide is MAP kinase-activated protein kinase 3 (Mapkapk3) (Rattus norvegicus (Rat)).